A 248-amino-acid polypeptide reads, in one-letter code: 1-(5-phosphoribosyl)-5-[(5-phosphoribosylamino)methylideneamino] imidazole-4-carboxamide isomerase (248 aa).

The Proton acceptor role is filled by aspartate 8. Catalysis depends on aspartate 131, which acts as the Proton donor.

The protein belongs to the HisA/HisF family.

The protein resides in the cytoplasm. It carries out the reaction 1-(5-phospho-beta-D-ribosyl)-5-[(5-phospho-beta-D-ribosylamino)methylideneamino]imidazole-4-carboxamide = 5-[(5-phospho-1-deoxy-D-ribulos-1-ylimino)methylamino]-1-(5-phospho-beta-D-ribosyl)imidazole-4-carboxamide. It participates in amino-acid biosynthesis; L-histidine biosynthesis; L-histidine from 5-phospho-alpha-D-ribose 1-diphosphate: step 4/9. The protein is 1-(5-phosphoribosyl)-5-[(5-phosphoribosylamino)methylideneamino] imidazole-4-carboxamide isomerase of Nitrosomonas eutropha (strain DSM 101675 / C91 / Nm57).